The sequence spans 364 residues: Mannose-1-phosphate guanyltransferase (364 aa).

Belongs to the transferase hexapeptide repeat family.

It localises to the cytoplasm. The enzyme catalyses alpha-D-mannose 1-phosphate + GTP + H(+) = GDP-alpha-D-mannose + diphosphate. The protein operates within nucleotide-sugar biosynthesis; GDP-alpha-D-mannose biosynthesis; GDP-alpha-D-mannose from alpha-D-mannose 1-phosphate (GTP route): step 1/1. Involved in cell wall synthesis where it is required for glycosylation. Involved in cell cycle progression through cell-size checkpoint. The sequence is that of Mannose-1-phosphate guanyltransferase (MPG1) from Cryptococcus neoformans var. neoformans serotype D (strain B-3501A) (Filobasidiella neoformans).